The primary structure comprises 67 residues: uncharacterized protein (67 aa).

This is an uncharacterized protein from Escherichia coli (strain K12).